A 115-amino-acid polypeptide reads, in one-letter code: Migration and invasion enhancer 1 (115 aa).

Over residues 1–10 (MSGDTGTTSV) the composition is skewed to polar residues. The disordered stretch occupies residues 1–22 (MSGDTGTTSVAPPPGETEPGHG). S2 carries the post-translational modification N-acetylserine. Residues C30 and C33 are joined by a disulfide bond. A lipid anchor (S-geranylgeranyl cysteine) is attached at C112. The propeptide at 113–115 (VIL) is removed in mature form.

It belongs to the SelWTH family. As to quaternary structure, interacts with GPX1. Isoprenylation facilitates association with the plasma membrane and enhances the migratory phenotype of cells by inducing increased filopodia formation.

It is found in the cytoplasm. The protein localises to the cytosol. Its subcellular location is the cell membrane. Its function is as follows. Increases cell migration by inducing filopodia formation at the leading edge of migrating cells. Plays a role in regulation of apoptosis, possibly through control of CASP3. May be involved in a redox-related process. The protein is Migration and invasion enhancer 1 (MIEN1) of Bos taurus (Bovine).